The following is a 417-amino-acid chain: Zinc finger protein CONSTANS-LIKE 16 (417 aa).

4 residues coordinate Zn(2+): cysteine 17, cysteine 20, cysteine 40, and histidine 45. A B box-type; atypical zinc finger spans residues 17–59 (CDSCVKRRARWYCAADDAFLCQSCDSLVHSANPLARRHERVRL). The tract at residues 63 to 105 (SPAVVKHSNHSSASPPHEVATWHHGFTRKARTPRGSGKKNNSS) is disordered. Positions 212–239 (LSNSEMFKIEKDEIEEEVEEIKAMSMDI) form a coiled coil. The region spanning 361-403 (REARVSRYREKRRTRLFSKKIRYEVRKLNAEKRPRMKGRFVKR) is the CCT domain.

This sequence belongs to the CONSTANS family.

Its subcellular location is the nucleus. The protein is Zinc finger protein CONSTANS-LIKE 16 (COL16) of Arabidopsis thaliana (Mouse-ear cress).